The primary structure comprises 275 residues: 3',5'-cyclic adenosine monophosphate phosphodiesterase CpdA (275 aa).

Positions 22, 24, 64, 94, 164, 203, and 205 each coordinate Fe cation. Residues His24, Asp64, and 94-95 (NH) contribute to the AMP site. His205 contacts AMP.

This sequence belongs to the cyclic nucleotide phosphodiesterase class-III family. Fe(2+) is required as a cofactor.

The enzyme catalyses 3',5'-cyclic AMP + H2O = AMP + H(+). Hydrolyzes cAMP to 5'-AMP. Plays an important regulatory role in modulating the intracellular concentration of cAMP, thereby influencing cAMP-dependent processes. The protein is 3',5'-cyclic adenosine monophosphate phosphodiesterase CpdA of Escherichia coli O157:H7.